A 136-amino-acid chain; its full sequence is Large ribosomal subunit protein bL12 (136 aa).

The protein belongs to the bacterial ribosomal protein bL12 family. Homodimer. Part of the ribosomal stalk of the 50S ribosomal subunit. Forms a multimeric L10(L12)X complex, where L10 forms an elongated spine to which 2 to 4 L12 dimers bind in a sequential fashion. Binds GTP-bound translation factors.

In terms of biological role, forms part of the ribosomal stalk which helps the ribosome interact with GTP-bound translation factors. Is thus essential for accurate translation. The sequence is that of Large ribosomal subunit protein bL12 from Synechococcus sp. (strain JA-2-3B'a(2-13)) (Cyanobacteria bacterium Yellowstone B-Prime).